The primary structure comprises 896 residues: Translation initiation factor IF-2 (896 aa).

Disordered regions lie at residues 32 to 99 (LAQA…TALP) and 117 to 304 (EITS…KQAE). The segment covering 35-48 (AGSSDTKNSPASKA) has biased composition (polar residues). A compositionally biased stretch (basic and acidic residues) spans 153 to 169 (TPERIEETPIIRTRTEP). Over residues 203 to 214 (AASTEETTQQQP) the composition is skewed to low complexity. Over residues 215–227 (RQNDAASHNNKQQ) the composition is skewed to polar residues. The segment covering 228–241 (PSGTSSRPASSAPS) has biased composition (low complexity). Over residues 256–280 (RGSERDRSKRSDESVKAFTGRDRYG) the composition is skewed to basic and acidic residues. In terms of domain architecture, tr-type G spans 401 to 570 (IRSPIVAFMG…ALQAEVLELK (170 aa)). Residues 410–417 (GHVDHGKT) form a G1 region. Residue 410–417 (GHVDHGKT) participates in GTP binding. The G2 stretch occupies residues 435-439 (AITQH). The segment at 456–459 (DTPG) is G3. GTP is bound by residues 456–460 (DTPGH) and 510–513 (NKCD). Residues 510-513 (NKCD) are G4. A G5 region spans residues 546–548 (SAK).

This sequence belongs to the TRAFAC class translation factor GTPase superfamily. Classic translation factor GTPase family. IF-2 subfamily.

Its subcellular location is the cytoplasm. Its function is as follows. One of the essential components for the initiation of protein synthesis. Protects formylmethionyl-tRNA from spontaneous hydrolysis and promotes its binding to the 30S ribosomal subunits. Also involved in the hydrolysis of GTP during the formation of the 70S ribosomal complex. The chain is Translation initiation factor IF-2 from Chlamydia trachomatis serovar L2 (strain ATCC VR-902B / DSM 19102 / 434/Bu).